We begin with the raw amino-acid sequence, 458 residues long: MLQIDVVILAAGMGKRMRSTLPKVLHPLAGKPILFHVLDTARILSPTKICVIYGHGGELVRQTVGNDPNLIWVKQTQQLGTGHAVKQALPCLGKNGITLVLFGDVPLVKSNTLKSLIDKACEDSLALLTVELNDPAGYGRIIRDPKTNRVQAIVEEQDALPSQKKIREINTGIMVLPNMYLESWLDRLSNANTQGEYYLTDIIAMAVNDGVQIETSSPASDWEVVGVNDKIQLSTLERAHQQDVAKGLMEQGVMFADPARFDVRGQLICGHNVEIDINCVFEGNVRLGDNVKISANCILRNVAISDGSIVHPFSMIEDTEVGKNCRVGPYARIRPGTQLDDAVHVGNFVEIKNSHIASGSKVNHLSYIGDTEMGRRVNIGAGTITCNYDGAFKHQTIIEDDVFIGSDSQLIAPITVAKGSTIGAGSTITRDTPEGQLTLSRIKQISIANWKRPKKNKD.

Residues 1-230 are pyrophosphorylase; that stretch reads MLQIDVVILA…DWEVVGVNDK (230 aa). UDP-N-acetyl-alpha-D-glucosamine-binding positions include 9–12, K23, Q75, and 80–81; these read LAAG and GT. D104 contacts Mg(2+). Residues G139, E155, N170, and N228 each contribute to the UDP-N-acetyl-alpha-D-glucosamine site. N228 is a Mg(2+) binding site. Residues 231 to 251 form a linker region; that stretch reads IQLSTLERAHQQDVAKGLMEQ. An N-acetyltransferase region spans residues 252–458; that stretch reads GVMFADPARF…NWKRPKKNKD (207 aa). R334 and K352 together coordinate UDP-N-acetyl-alpha-D-glucosamine. H364 acts as the Proton acceptor in catalysis. UDP-N-acetyl-alpha-D-glucosamine-binding residues include Y367 and N378. Residues A381, 387–388, S406, A424, and R441 contribute to the acetyl-CoA site; that span reads NY.

In the N-terminal section; belongs to the N-acetylglucosamine-1-phosphate uridyltransferase family. It in the C-terminal section; belongs to the transferase hexapeptide repeat family. Homotrimer. It depends on Mg(2+) as a cofactor.

Its subcellular location is the cytoplasm. It catalyses the reaction alpha-D-glucosamine 1-phosphate + acetyl-CoA = N-acetyl-alpha-D-glucosamine 1-phosphate + CoA + H(+). The catalysed reaction is N-acetyl-alpha-D-glucosamine 1-phosphate + UTP + H(+) = UDP-N-acetyl-alpha-D-glucosamine + diphosphate. The protein operates within nucleotide-sugar biosynthesis; UDP-N-acetyl-alpha-D-glucosamine biosynthesis; N-acetyl-alpha-D-glucosamine 1-phosphate from alpha-D-glucosamine 6-phosphate (route II): step 2/2. It participates in nucleotide-sugar biosynthesis; UDP-N-acetyl-alpha-D-glucosamine biosynthesis; UDP-N-acetyl-alpha-D-glucosamine from N-acetyl-alpha-D-glucosamine 1-phosphate: step 1/1. Its pathway is bacterial outer membrane biogenesis; LPS lipid A biosynthesis. Its function is as follows. Catalyzes the last two sequential reactions in the de novo biosynthetic pathway for UDP-N-acetylglucosamine (UDP-GlcNAc). The C-terminal domain catalyzes the transfer of acetyl group from acetyl coenzyme A to glucosamine-1-phosphate (GlcN-1-P) to produce N-acetylglucosamine-1-phosphate (GlcNAc-1-P), which is converted into UDP-GlcNAc by the transfer of uridine 5-monophosphate (from uridine 5-triphosphate), a reaction catalyzed by the N-terminal domain. In Nitrosomonas eutropha (strain DSM 101675 / C91 / Nm57), this protein is Bifunctional protein GlmU.